Consider the following 335-residue polypeptide: Nucleoid-associated protein YejK (335 aa).

It belongs to the YejK family.

It is found in the cytoplasm. The protein resides in the nucleoid. The sequence is that of Nucleoid-associated protein YejK from Shigella flexneri.